A 33-amino-acid chain; its full sequence is MSDINATRLPIFWFIYFPCVGDNVDNTLTRGER.

Positions 1–10 are excised as a propeptide; sequence MSDINATRLP. The cyclopeptide (Ile-Pro) cross-link spans 11–18; the sequence is IFWFIYFP. The propeptide occupies 19–32; the sequence is CVGDNVDNTLTRGE.

It belongs to the MSDIN fungal toxin family. Processed by the macrocyclase-peptidase enzyme POPB to yield a toxic cyclic octapeptide. POPB first removes 10 residues from the N-terminus. Conformational trapping of the remaining peptide forces the enzyme to release this intermediate rather than proceed to macrocyclization. The enzyme rebinds the remaining peptide in a different conformation and catalyzes macrocyclization of the N-terminal 8 residues.

Functionally, probable toxin that belongs to the MSDIN-like toxin family responsible for a large number of food poisoning cases and deaths. The sequence is that of MSDIN-like toxin proprotein 5 from Amanita phalloides (Death cap).